A 162-amino-acid polypeptide reads, in one-letter code: Ribonuclease P protein component (162 aa).

The tract at residues 1-63 is disordered; that stretch reads MDEKDLATQP…PPAAGGKLLS (63 aa). Positions 21-38 are enriched in basic and acidic residues; the sequence is GPHEDPRRQEGVEAEKAE.

This sequence belongs to the RnpA family. In terms of assembly, consists of a catalytic RNA component (M1 or rnpB) and a protein subunit.

It catalyses the reaction Endonucleolytic cleavage of RNA, removing 5'-extranucleotides from tRNA precursor.. Its function is as follows. RNaseP catalyzes the removal of the 5'-leader sequence from pre-tRNA to produce the mature 5'-terminus. It can also cleave other RNA substrates such as 4.5S RNA. The protein component plays an auxiliary but essential role in vivo by binding to the 5'-leader sequence and broadening the substrate specificity of the ribozyme. This Thermus scotoductus protein is Ribonuclease P protein component.